The primary structure comprises 167 residues: Beta-3 adrenergic receptor (167 aa).

Residues 1 to 25 (RVGADAEAQECHSNPRCCSFASNMP) are Extracellular-facing. Cysteine 11 and cysteine 17 form a disulfide bridge. A helical transmembrane segment spans residues 26 to 47 (YALLSSSVSFYLPLLVMLFVYA). The Cytoplasmic portion of the chain corresponds to 48–114 (RVFVVAKRQR…LPLREHRALR (67 aa)). The interval 66-97 (RFPPEESPRSPSRSPSPVAGGTGEAPDGVPSC) is disordered. Residues 115–136 (TLGLIMGIFSLCWLPFFLANVL) form a helical membrane-spanning segment. Residues 137 to 148 (RALAGPSIVPNG) lie on the Extracellular side of the membrane. A helical membrane pass occupies residues 149-167 (VFIALNWLGYANSAFNPLI).

It belongs to the G-protein coupled receptor 1 family. Adrenergic receptor subfamily. ADRB3 sub-subfamily. In terms of assembly, interacts with ARRDC3.

The protein localises to the cell membrane. Functionally, beta-adrenergic receptors mediate the catecholamine-induced activation of adenylate cyclase through the action of G proteins. Beta-3 is involved in the regulation of lipolysis and thermogenesis. The sequence is that of Beta-3 adrenergic receptor (ADRB3) from Meriones unguiculatus (Mongolian jird).